The chain runs to 429 residues: Enolase (429 aa).

(2R)-2-phosphoglycerate is bound at residue glutamine 164. Glutamate 206 acts as the Proton donor in catalysis. Aspartate 243, glutamate 286, and aspartate 313 together coordinate Mg(2+). Positions 338, 367, 368, and 389 each coordinate (2R)-2-phosphoglycerate. The Proton acceptor role is filled by lysine 338.

This sequence belongs to the enolase family. It depends on Mg(2+) as a cofactor.

It is found in the cytoplasm. The protein localises to the secreted. The protein resides in the cell surface. The catalysed reaction is (2R)-2-phosphoglycerate = phosphoenolpyruvate + H2O. Its pathway is carbohydrate degradation; glycolysis; pyruvate from D-glyceraldehyde 3-phosphate: step 4/5. Its function is as follows. Catalyzes the reversible conversion of 2-phosphoglycerate (2-PG) into phosphoenolpyruvate (PEP). It is essential for the degradation of carbohydrates via glycolysis. This chain is Enolase, found in Thermosipho melanesiensis (strain DSM 12029 / CIP 104789 / BI429).